Reading from the N-terminus, the 219-residue chain is Octanoyltransferase (219 aa).

The BPL/LPL catalytic domain maps to 34 to 209 (SESPDELWIV…TFSQLLGYQH (176 aa)). Substrate-binding positions include 73–80 (RGGQVTYH), 140–142 (SLG), and 153–155 (GLA). Cysteine 171 serves as the catalytic Acyl-thioester intermediate.

Belongs to the LipB family.

The protein localises to the cytoplasm. It carries out the reaction octanoyl-[ACP] + L-lysyl-[protein] = N(6)-octanoyl-L-lysyl-[protein] + holo-[ACP] + H(+). It functions in the pathway protein modification; protein lipoylation via endogenous pathway; protein N(6)-(lipoyl)lysine from octanoyl-[acyl-carrier-protein]: step 1/2. Its function is as follows. Catalyzes the transfer of endogenously produced octanoic acid from octanoyl-acyl-carrier-protein onto the lipoyl domains of lipoate-dependent enzymes. Lipoyl-ACP can also act as a substrate although octanoyl-ACP is likely to be the physiological substrate. In Shewanella putrefaciens (strain CN-32 / ATCC BAA-453), this protein is Octanoyltransferase.